We begin with the raw amino-acid sequence, 409 residues long: Inactive serine protease 35 (409 aa).

Residues 1-17 form the signal peptide; it reads MLLWLIFFTPGWTLIDG. N-linked (GlcNAc...) asparagine glycans are attached at residues Asn87 and Asn107. Residues 120–404 form the Peptidase S1 domain; the sequence is VYGTDSRFSI…ICLWIHGNDA (285 aa). Cys150 and Cys166 are disulfide-bonded. Positions 188–203 are enriched in basic residues; it reads RNKSGGKKRRGSKRSR. The tract at residues 188 to 246 is disordered; sequence RNKSGGKKRRGSKRSRRETSGGDQREGPREHLQDRVKAGRRRKQSGGGQRVSEGRPSFR. Residues 204–224 show a composition bias toward basic and acidic residues; sequence RETSGGDQREGPREHLQDRVK.

This sequence belongs to the peptidase S1 family.

The protein localises to the secreted. This Macaca mulatta (Rhesus macaque) protein is Inactive serine protease 35 (PRSS35).